The following is a 269-amino-acid chain: 4-hydroxy-tetrahydrodipicolinate reductase (269 aa).

NAD(+) contacts are provided by residues 8-13 (GASGRM), Glu34, 98-100 (GTT), and 122-125 (APNM). His155 (proton donor/acceptor) is an active-site residue. A (S)-2,3,4,5-tetrahydrodipicolinate-binding site is contributed by His156. Lys159 functions as the Proton donor in the catalytic mechanism. (S)-2,3,4,5-tetrahydrodipicolinate is bound at residue 165–166 (GT).

Belongs to the DapB family.

It localises to the cytoplasm. The enzyme catalyses (S)-2,3,4,5-tetrahydrodipicolinate + NAD(+) + H2O = (2S,4S)-4-hydroxy-2,3,4,5-tetrahydrodipicolinate + NADH + H(+). It catalyses the reaction (S)-2,3,4,5-tetrahydrodipicolinate + NADP(+) + H2O = (2S,4S)-4-hydroxy-2,3,4,5-tetrahydrodipicolinate + NADPH + H(+). It participates in amino-acid biosynthesis; L-lysine biosynthesis via DAP pathway; (S)-tetrahydrodipicolinate from L-aspartate: step 4/4. Catalyzes the conversion of 4-hydroxy-tetrahydrodipicolinate (HTPA) to tetrahydrodipicolinate. This is 4-hydroxy-tetrahydrodipicolinate reductase from Desulfotalea psychrophila (strain LSv54 / DSM 12343).